Reading from the N-terminus, the 341-residue chain is Methionine import ATP-binding protein MetN 3 (341 aa).

The 240-residue stretch at 2-241 (ILLENVKKIY…PKQDITKRFV (240 aa)) folds into the ABC transporter domain. Residue 38–45 (GYSGAGKS) coordinates ATP.

Belongs to the ABC transporter superfamily. Methionine importer (TC 3.A.1.24) family. In terms of assembly, the complex is composed of two ATP-binding proteins (MetN), two transmembrane proteins (MetI) and a solute-binding protein (MetQ).

It localises to the cell membrane. It carries out the reaction L-methionine(out) + ATP + H2O = L-methionine(in) + ADP + phosphate + H(+). It catalyses the reaction D-methionine(out) + ATP + H2O = D-methionine(in) + ADP + phosphate + H(+). In terms of biological role, part of the ABC transporter complex MetNIQ involved in methionine import. Responsible for energy coupling to the transport system. The polypeptide is Methionine import ATP-binding protein MetN 3 (Bacillus cereus (strain ATCC 14579 / DSM 31 / CCUG 7414 / JCM 2152 / NBRC 15305 / NCIMB 9373 / NCTC 2599 / NRRL B-3711)).